A 171-amino-acid polypeptide reads, in one-letter code: MLDLSYSLERVLQEDPAARNKWEVLLLYPGIHALLCYRLAHALHKRRFYFIARALSQLARFITGIEIHPGAKIGRGLFIDHGMGVVIGETTEIGDDVTIYHGVTLGGTGKFKGKRHPTLGNRVVVGAGAKVLGAICVGDDVRIGANAVVLSDLPTGSTAVGAKAKTITKDR.

Belongs to the transferase hexapeptide repeat family.

It is found in the cytoplasm. It catalyses the reaction L-serine + acetyl-CoA = O-acetyl-L-serine + CoA. The protein operates within amino-acid biosynthesis; L-cysteine biosynthesis; L-cysteine from L-serine: step 1/2. This is Serine acetyltransferase (cysE) from Helicobacter pylori (strain J99 / ATCC 700824) (Campylobacter pylori J99).